Here is a 494-residue protein sequence, read N- to C-terminus: Tripartite motif-containing protein 5 (494 aa).

N-acetylalanine is present on Ala-2. The RING-type zinc-finger motif lies at 15 to 59 (CPICLELLTEPLSLDCGHSFCQACITANHKKSMLHQGERSCPLCR). A Phosphoserine modification is found at Ser-86. Residues 91–132 (QKVDHCARHGEKLLLFCQQDGNVICWLCERSQEHRGHHTLLV) form a B box-type zinc finger. Zn(2+) is bound by residues Cys-96, His-99, Cys-118, and His-124. A coiled-coil region spans residues 132–222 (VEEVAQTYRE…KRLTQSENDM (91 aa)). The tract at residues 186-199 (FKQLRDILDCEESN) is required for interaction with GABARAP and for autophagy. Residues 280–494 (PDLKGMLQVF…LPMTLCSPRS (215 aa)) form the B30.2/SPRY domain.

It belongs to the TRIM/RBCC family. Can form homodimers and homotrimers. In addition to lower-order dimerization, also exhibits a higher-order multimerization and both low- and high-order multimerizations are essential for its restriction activity. Interacts with BTBD1 and BTBD2. Interacts with PSMC4, PSMC5, PSMD7 and HSPA8/HSC70. Interacts (via B30.2/SPRY domain) with HSPA1A/B. Interacts with PSMC2, MAP3K7/TAK1, TAB2 and TAB3. Interacts with SQSTM1. Interacts with TRIM6 and TRIM34. Interacts with ULK1 (phosphorylated form), GABARAP, GABARAPL1, GABARAPL2, MAP1LC3A, MAP1LC3C and BECN1. Post-translationally, degraded in a proteasome-independent fashion in the absence of viral infection but in a proteasome-dependent fashion following exposure to restriction sensitive virus. Autoubiquitinated in a RING finger- and UBE2D2-dependent manner. Monoubiquitinated by TRIM21. Deubiquitinated by Yersinia YopJ. Ubiquitination may not lead to proteasomal degradation.

Its subcellular location is the cytoplasm. It localises to the nucleus. The catalysed reaction is S-ubiquitinyl-[E2 ubiquitin-conjugating enzyme]-L-cysteine + [acceptor protein]-L-lysine = [E2 ubiquitin-conjugating enzyme]-L-cysteine + N(6)-ubiquitinyl-[acceptor protein]-L-lysine.. The protein operates within protein modification; protein ubiquitination. In terms of biological role, capsid-specific restriction factor that prevents infection from non-host-adapted retroviruses. Blocks viral replication early in the life cycle, after viral entry but before reverse transcription. In addition to acting as a capsid-specific restriction factor, also acts as a pattern recognition receptor that activates innate immune signaling in response to the retroviral capsid lattice. Binding to the viral capsid triggers its E3 ubiquitin ligase activity, and in concert with the heterodimeric ubiquitin conjugating enzyme complex UBE2V1-UBE2N (also known as UBC13-UEV1A complex) generates 'Lys-63'-linked polyubiquitin chains, which in turn are catalysts in the autophosphorylation of the MAP3K7/TAK1 complex (includes TAK1, TAB2, and TAB3). Activation of the MAP3K7/TAK1 complex by autophosphorylation results in the induction and expression of NF-kappa-B and MAPK-responsive inflammatory genes, thereby leading to an innate immune response in the infected cell. Plays a role in regulating autophagy through activation of autophagy regulator BECN1 by causing its dissociation from its inhibitors BCL2 and TAB2. This chain is Tripartite motif-containing protein 5 (TRIM5), found in Pithecia pithecia (White-faced saki).